The following is a 425-amino-acid chain: Nucleoporin nup45 (425 aa).

Positions 1 to 10 are enriched in polar residues; it reads MFGLNKTPSF. The segment at 1–207 is disordered; it reads MFGLNKTPSF…GFGLSNNTQT (207 aa). Residues 11-27 show a composition bias toward low complexity; the sequence is GSTGTQNQNTGTSAGTG. The span at 28–45 shows a compositional bias: polar residues; it reads LFSSNTFGNNTQANTPAS. The segment covering 47 to 56 has biased composition (gly residues); the sequence is GFGGVTGGAF. The span at 72-89 shows a compositional bias: polar residues; it reads PNATSTTPGLNLFGQNPQ. 2 stretches are compositionally biased toward low complexity: residues 112–126 and 135–150; these read NQNQ…AAPT and QNQT…ANTS. Residues 167 to 207 are compositionally biased toward polar residues; that stretch reads NRPNTSTFGQFSTQPASAGLFGQSTQPSGSTGFGLSNNTQT. 2 positions are modified to phosphoserine: S289 and S290.

It localises to the cytoplasm. It is found in the nucleus. The protein localises to the nuclear pore complex. Functions as a component of the nuclear pore complex (NPC). NPC components, collectively referred to as nucleoporins (NUPs), can play the role of both NPC structural components and of docking or interaction partners for transiently associated nuclear transport factors. Active directional transport is assured by both, a Phe-Gly (FG) repeat affinity gradient for these transport factors across the NPC and a transport cofactor concentration gradient across the nuclear envelope. The sequence is that of Nucleoporin nup45 (nup45) from Schizosaccharomyces pombe (strain 972 / ATCC 24843) (Fission yeast).